The primary structure comprises 988 residues: Ubiquitin carboxyl-terminal hydrolase 36 (988 aa).

The tract at residues 16–55 (PTLRTDNNGARKQAEHPNNQSHHNHPHPTSNPNELPKPKR) is disordered. The span at 31-48 (HPNNQSHHNHPHPTSNPN) shows a compositional bias: low complexity. The USP domain occupies 78-386 (TGMINVGNTC…NAYIMFFELD (309 aa)). The Nucleophile role is filled by Cys87. The active-site Proton acceptor is His345. Disordered regions lie at residues 393–422 (PPANRPNGVRLTNGHSTTPVPAATVSSPSP), 483–782 (ATSA…VTSN), and 868–988 (EQRQ…QQQT). Composition is skewed to low complexity over residues 408–422 (STTPVPAATVSSPSP) and 490–509 (NGNKSSSPSSNSSSNHKSIN). A phosphoserine mark is found at Ser419 and Ser421. Residues 532-544 (TTAQLPSMPNMTE) are compositionally biased toward polar residues. Phosphothreonine occurs at positions 561 and 565. Phosphoserine occurs at positions 575 and 577. The span at 592–601 (EGEDFSESDQ) shows a compositional bias: acidic residues. The segment covering 602–631 (ESGQTNGHSKTNGSLTNGSASSSVHVNNSK) has biased composition (polar residues). Over residues 632-649 (QKTDAIDEIFKSLKKSAD) the composition is skewed to basic and acidic residues. Ser650 carries the phosphoserine modification. Over residues 650–659 (SEEDDDEEEP) the composition is skewed to acidic residues. Low complexity predominate over residues 669 to 679 (PQKQSQSQSKA). The segment covering 680–689 (PPSPKTPPSP) has biased composition (pro residues). Ser682 is subject to Phosphoserine. Thr685 carries the post-translational modification Phosphothreonine. At Ser688 the chain carries Phosphoserine. The segment covering 707–717 (VDAIDDDDDAV) has biased composition (acidic residues). At Thr728 the chain carries Phosphothreonine. Over residues 735 to 747 (NPFSSSKPSTDSP) the composition is skewed to polar residues. Position 746 is a phosphoserine (Ser746). Phosphothreonine is present on Thr749. The span at 762–782 (ALKSHQQPRVGNGYQSNVTSN) shows a compositional bias: polar residues. Composition is skewed to low complexity over residues 892–903 (SGSAKGNNASNS) and 930–943 (RFHNQNYRQNFQQR).

Belongs to the peptidase C19 family. In terms of assembly, interacts with atms/PAF1, but not with CycT.

The protein localises to the nucleus. It is found in the nucleolus. It carries out the reaction Thiol-dependent hydrolysis of ester, thioester, amide, peptide and isopeptide bonds formed by the C-terminal Gly of ubiquitin (a 76-residue protein attached to proteins as an intracellular targeting signal).. Functionally, required for maintaining multiple types of adult stem cells, including male and female germline, epithelial follicle cell and intestinal stem cells. May function as a transcriptional repressor by continually deubiquiting histone H2B at the promoters of genes critical for cellular differentiation, thereby preventing histone H3 'Lys-4' trimethylation (H3K4). Controls selective autophagy activation by ubiquitinated proteins. The chain is Ubiquitin carboxyl-terminal hydrolase 36 (Usp36) from Drosophila simulans (Fruit fly).